Reading from the N-terminus, the 252-residue chain is 2-succinyl-6-hydroxy-2,4-cyclohexadiene-1-carboxylate synthase (252 aa).

It belongs to the AB hydrolase superfamily. MenH family. In terms of assembly, monomer.

The enzyme catalyses 5-enolpyruvoyl-6-hydroxy-2-succinyl-cyclohex-3-ene-1-carboxylate = (1R,6R)-6-hydroxy-2-succinyl-cyclohexa-2,4-diene-1-carboxylate + pyruvate. The protein operates within quinol/quinone metabolism; 1,4-dihydroxy-2-naphthoate biosynthesis; 1,4-dihydroxy-2-naphthoate from chorismate: step 3/7. It participates in quinol/quinone metabolism; menaquinone biosynthesis. In terms of biological role, catalyzes a proton abstraction reaction that results in 2,5-elimination of pyruvate from 2-succinyl-5-enolpyruvyl-6-hydroxy-3-cyclohexene-1-carboxylate (SEPHCHC) and the formation of 2-succinyl-6-hydroxy-2,4-cyclohexadiene-1-carboxylate (SHCHC). This is 2-succinyl-6-hydroxy-2,4-cyclohexadiene-1-carboxylate synthase from Shigella boydii serotype 4 (strain Sb227).